The chain runs to 456 residues: Bifunctional protein GlmU (456 aa).

A pyrophosphorylase region spans residues 1–229 (MSNSAMSVVI…LSEVEGVNNR (229 aa)). UDP-N-acetyl-alpha-D-glucosamine contacts are provided by residues 11-14 (LAAG), Lys25, Gln76, 81-82 (GT), 103-105 (YGD), Gly140, Glu154, Asn169, and Asn227. Residue Asp105 coordinates Mg(2+). Residue Asn227 participates in Mg(2+) binding. Residues 230-250 (LQLSALERVYQREQADRLLLA) are linker. The interval 251 to 456 (GVMLLDPARF…SGWQRPVKKK (206 aa)) is N-acetyltransferase. UDP-N-acetyl-alpha-D-glucosamine-binding residues include Arg333 and Lys351. The active-site Proton acceptor is His363. UDP-N-acetyl-alpha-D-glucosamine-binding residues include Tyr366 and Asn377. Residues Ala380, 386-387 (NY), Ser405, Ala423, and Arg440 each bind acetyl-CoA.

It in the N-terminal section; belongs to the N-acetylglucosamine-1-phosphate uridyltransferase family. In the C-terminal section; belongs to the transferase hexapeptide repeat family. In terms of assembly, homotrimer. The cofactor is Mg(2+).

The protein localises to the cytoplasm. It catalyses the reaction alpha-D-glucosamine 1-phosphate + acetyl-CoA = N-acetyl-alpha-D-glucosamine 1-phosphate + CoA + H(+). It carries out the reaction N-acetyl-alpha-D-glucosamine 1-phosphate + UTP + H(+) = UDP-N-acetyl-alpha-D-glucosamine + diphosphate. It functions in the pathway nucleotide-sugar biosynthesis; UDP-N-acetyl-alpha-D-glucosamine biosynthesis; N-acetyl-alpha-D-glucosamine 1-phosphate from alpha-D-glucosamine 6-phosphate (route II): step 2/2. The protein operates within nucleotide-sugar biosynthesis; UDP-N-acetyl-alpha-D-glucosamine biosynthesis; UDP-N-acetyl-alpha-D-glucosamine from N-acetyl-alpha-D-glucosamine 1-phosphate: step 1/1. Its pathway is bacterial outer membrane biogenesis; LPS lipid A biosynthesis. Functionally, catalyzes the last two sequential reactions in the de novo biosynthetic pathway for UDP-N-acetylglucosamine (UDP-GlcNAc). The C-terminal domain catalyzes the transfer of acetyl group from acetyl coenzyme A to glucosamine-1-phosphate (GlcN-1-P) to produce N-acetylglucosamine-1-phosphate (GlcNAc-1-P), which is converted into UDP-GlcNAc by the transfer of uridine 5-monophosphate (from uridine 5-triphosphate), a reaction catalyzed by the N-terminal domain. This chain is Bifunctional protein GlmU, found in Pectobacterium carotovorum subsp. carotovorum (strain PC1).